A 523-amino-acid chain; its full sequence is MNNIHNHKILILDFGSQYTQLIARRIREIGVYCELWAWDVTEKQIREFNPTGIILSGGPESTTETNSPHAPEYVFKAGVPVLGICYGMQTMAMQLGGLTEASEQREFGYAAVELQHADQLFAKLNDDLTASQPKLDVWMSHGDKVTRLPAGFQTTAVTPTCPIAAMSDEKRRFYGVQFHPEVTHTKSGLALLTNFVENICGCARSWTPENIIEDAVAKIKQKVGNDQVILGLSGGVDSSVTALLLHRAIGKNLHCVFVDNGLLRLNEGDQVMEMFGDKFGLNIIRVNAEERFLEALKGIDEPEAKRKIIGKVFIDIFDDEAKKLTDVKWLAQGTIYPDVIESAASKTGKAHVIKSHHNVGGLPDYMKLGLVEPLRELFKDEVRKIGLTLGLPAEMLNRHPFPGPGLGVRVLGEIKKEYCDLLRNADAIFIEELYKSGWYYKVSQAFTVFLPVKSVGVMGDGRKYDWVVSLRAVETIDFMTAHWAHLPYELLGKISNRIINEVNGISRVVYDVSGKPPATIEWE.

A Glutamine amidotransferase type-1 domain is found at 8–205 (KILILDFGSQ…VENICGCARS (198 aa)). C85 serves as the catalytic Nucleophile. Catalysis depends on residues H179 and E181. One can recognise a GMPS ATP-PPase domain in the interval 206-398 (WTPENIIEDA…LGLPAEMLNR (193 aa)). 233 to 239 (SGGVDSS) contributes to the ATP binding site.

In terms of assembly, homodimer.

The enzyme catalyses XMP + L-glutamine + ATP + H2O = GMP + L-glutamate + AMP + diphosphate + 2 H(+). Its pathway is purine metabolism; GMP biosynthesis; GMP from XMP (L-Gln route): step 1/1. Its function is as follows. Catalyzes the synthesis of GMP from XMP. This is GMP synthase [glutamine-hydrolyzing] from Haemophilus ducreyi (strain 35000HP / ATCC 700724).